The primary structure comprises 366 residues: Isocitrate dehydrogenase [NAD] subunit alpha, mitochondrial (366 aa).

The N-terminal 27 residues, 1-27 (MAGPAWISKVSRLLGAFHNQKQVTRGF), are a transit peptide targeting the mitochondrion. An N6-succinyllysine modification is found at Lys-77. Phosphothreonine is present on Thr-101. Substrate-binding residues include Arg-115, Arg-125, and Arg-146. N6-acetyllysine is present on Lys-223. Mg(2+)-binding residues include Asp-233, Asp-257, and Asp-261. Residue Lys-343 is modified to N6-acetyllysine; alternate. The residue at position 343 (Lys-343) is an N6-succinyllysine; alternate. Lys-350 is modified (N6-succinyllysine).

Belongs to the isocitrate and isopropylmalate dehydrogenases family. In terms of assembly, heterooligomer of subunits alpha (IDH3A), beta (IDH3B), and gamma (IDH3G) in the apparent ratio of 2:1:1. The heterodimer containing one IDH3A and one IDH3B subunit and the heterodimer containing one IDH3A and one IDH3G subunit assemble into a heterotetramer (which contains two subunits of IDH3A, one of IDH3B and one of IDH3G) and further into the heterooctamer. Requires Mg(2+) as cofactor. Mn(2+) is required as a cofactor.

The protein localises to the mitochondrion. It catalyses the reaction D-threo-isocitrate + NAD(+) = 2-oxoglutarate + CO2 + NADH. The heterotetramer and the heterodimer composed of IDH3A and IDH3G subunits can be allosterically activated by citrate (CIT) or/and ADP, and the two activators can act independently or synergistically. The heterodimer composed of IDH3A and IDH3B subunits cannot be allosterically regulated and the allosteric regulation of the heterotetramer is through the IDH3G subunit and not the IDH3B subunit. The IDH3G subunit contains the allosteric site which consists of a CIT-binding site and an ADP-binding site, and the binding of CIT and ADP causes conformational changes at the allosteric site which are transmitted to the active site in the catalytic subunit (IDH3A) through a cascade of conformational changes at the heterodimer interface, leading to stabilization of the isocitrate-binding at the active site and thus activation of the enzyme. ATP can activate the heterotetramer and the heterodimer composed of IDH3A and IDH3G subunits at low concentrations but inhibits their activities at high concentrations, whereas ATP exhibits only inhibitory effect on the heterodimer composed of IDH3A and IDH3B subunits. In terms of biological role, catalytic subunit of the enzyme which catalyzes the decarboxylation of isocitrate (ICT) into alpha-ketoglutarate. The heterodimer composed of the alpha (IDH3A) and beta (IDH3B) subunits and the heterodimer composed of the alpha (IDH3A) and gamma (IDH3G) subunits, have considerable basal activity but the full activity of the heterotetramer (containing two subunits of IDH3A, one of IDH3B and one of IDH3G) requires the assembly and cooperative function of both heterodimers. This chain is Isocitrate dehydrogenase [NAD] subunit alpha, mitochondrial, found in Bos taurus (Bovine).